A 319-amino-acid polypeptide reads, in one-letter code: Tyrosine phosphatase-like protein N3 (319 aa).

One can recognise a Tyrosine-protein phosphatase domain in the interval 7-285; the sequence is SNLSIHEFWR…LIINKILLHS (279 aa).

The protein belongs to the protein-tyrosine phosphatase family.

This is Tyrosine phosphatase-like protein N3 (N7) from Microplitis demolitor bracovirus (isolate Webb) (MdBV).